A 292-amino-acid chain; its full sequence is Phosphatidylglycerol--prolipoprotein diacylglyceryl transferase (292 aa).

The next 4 helical transmembrane spans lie at 7 to 27 (IILSVVIILAVGIGLFFFLRE), 45 to 65 (FQLRWYSICIASGILVAYVLA), 83 to 103 (LFWGIVAGILGARIYYVIFNW), and 116 to 136 (IWHGGLAIHGGIFGALLMIFI). Arg165 is a binding site for a 1,2-diacyl-sn-glycero-3-phospho-(1'-sn-glycerol). 2 helical membrane-spanning segments follow: residues 204 to 224 (PTFLYESLWDITIFVFLYFFV) and 264 to 284 (AAQVVSIILIFIGAAWYAYII).

It belongs to the Lgt family.

The protein resides in the cell inner membrane. It carries out the reaction L-cysteinyl-[prolipoprotein] + a 1,2-diacyl-sn-glycero-3-phospho-(1'-sn-glycerol) = an S-1,2-diacyl-sn-glyceryl-L-cysteinyl-[prolipoprotein] + sn-glycerol 1-phosphate + H(+). It functions in the pathway protein modification; lipoprotein biosynthesis (diacylglyceryl transfer). In terms of biological role, catalyzes the transfer of the diacylglyceryl group from phosphatidylglycerol to the sulfhydryl group of the N-terminal cysteine of a prolipoprotein, the first step in the formation of mature lipoproteins. This chain is Phosphatidylglycerol--prolipoprotein diacylglyceryl transferase, found in Fervidobacterium nodosum (strain ATCC 35602 / DSM 5306 / Rt17-B1).